A 409-amino-acid chain; its full sequence is MAKRTPSIDTKNLTAVQLMELDACVRCGECVKWCPTYAASGGKPGLAPRDKILRWRQYMNKSYGLKAKLFGPQEVSPSELEEFKDDVHGCTTCGVCATVCEAGINTVEIWEAIRTNLVKKGIGPYGKQSAFPKLVGQYHNPYMKDQKDRLAWVPPDVKIEDKADIVYFTGCTAGYNQLALAFATSRVLNKLGIKFAMLGEEEWCCGSALIRTGQVHVDDVARELARHNVEALQKKGAKKVLFACAGCFRAAKIDWPRLLGKELPFEVIHITQFLADLIQADKIKWEKPINKTITYHDPCHLGRHVGVFNAPRYVLSHIPGVKFVEMDRSKEFQRCCGAGGGVKAGMPDLAVAMGESRVKDALETNADILSSACPFCKRNLSDGRDALKSDIVVEDIIELVAEALGLSTS.

2 consecutive 4Fe-4S ferredoxin-type domains span residues 14 to 44 (TAVQ…GGKP) and 81 to 110 (EEFK…VEIW). [4Fe-4S] cluster contacts are provided by Cys-24, Cys-27, Cys-30, Cys-34, Cys-90, Cys-93, Cys-96, and Cys-100.

Belongs to the HdrD family. As to quaternary structure, the dihydromethanophenazine:CoB--CoM heterodisulfide reductase is composed of two subunits; HdrD and HdrE. [4Fe-4S] cluster is required as a cofactor.

The enzyme catalyses methanophenazine + coenzyme B + coenzyme M = dihydromethanophenazine + coenzyme M-coenzyme B heterodisulfide. It functions in the pathway cofactor metabolism; coenzyme M-coenzyme B heterodisulfide reduction; coenzyme B and coenzyme M from coenzyme M-coenzyme B heterodisulfide: step 1/1. Part of a complex that catalyzes the reversible reduction of CoM-S-S-CoB to the thiol-coenzymes H-S-CoM (coenzyme M) and H-S-CoB (coenzyme B). The sequence is that of Dihydromethanophenazine:CoB--CoM heterodisulfide reductase subunit D (hdrD) from Methanosarcina barkeri (strain Fusaro / DSM 804).